The sequence spans 513 residues: MCLESDGVGTVSNSQGCIPGAEERGLETLPGRMNPTSLDVKAVELESSSSKPDKAYNWKRASVAAAGILSVGNVLNYLDRYTVAGVLLDIQQHFEVKDSGAGLLQTVFICSFMVAAPIFGYLGDRFNRKVILSSGIFFWSAITFSSSFIPKKYFWLLVLSRGLVGIGEASYSTIAPTIIGDLFTKNTRTLMLSVFYFAIPLGSGLGYITGSSVKQVAGDWRWALRVSPVLGVITGTLLLIFVPTAKRGHAEQLKGSSWIRDMRGLIKNRSYVFSSLATSTVSFATGALGMWIPLYLYRAQVVQKSVEPCNIPPCSTKDSLIFGAITCLTGFLGVIIGAGATKWCRRKTQRADPLVCAVGMLGSAIFICLVFVAAKSSIIAAYICIFAGETLLFSNWAITADMLMYVVIPTRRATAVALQSFTSHLLGDAGSPYLIGFISDLIQQSTTKSSLWEFLSLGYALMLCPFVVVLGGMFFLATALFFLEDREKAEKLEPCSDPFTVGNCSDSEEASIL.

11 consecutive transmembrane segments (helical) span residues 102–122 (GLLQTVFICSFMVAAPIFGYL), 130–150 (VILSSGIFFWSAITFSSSFIP), 163–183 (LVGIGEASYSTIAPTIIGDLF), 190–210 (LMLSVFYFAIPLGSGLGYITG), 222–242 (WALRVSPVLGVITGTLLLIFV), 276–296 (LATSTVSFATGALGMWIPLYL), 320–340 (LIFGAITCLTGFLGVIIGAGA), 354–374 (LVCAVGMLGSAIFICLVFVAA), 378–398 (IIAAYICIFAGETLLFSNWAI), 422–442 (TSHLLGDAGSPYLIGFISDLI), and 463–483 (LCPFVVVLGGMFFLATALFFL).

The protein belongs to the major facilitator superfamily. Spinster (TC 2.A.1.49) family.

The protein resides in the cell membrane. It is found in the endosome membrane. The enzyme catalyses sphing-4-enine 1-phosphate(in) = sphing-4-enine 1-phosphate(out). It catalyses the reaction sphinganine 1-phosphate(in) = sphinganine 1-phosphate(out). Its function is as follows. Lipid transporter that specifically mediates export of sphingosine-1-phosphate (sphing-4-enine 1-phosphate, S1P) and sphinganine-1-phosphate. The polypeptide is Sphingosine-1-phosphate transporter SPNS2 (spns2) (Xenopus tropicalis (Western clawed frog)).